The sequence spans 89 residues: Neuropeptide S (89 aa).

An N-terminal signal peptide occupies residues 1–23 (MISSVKLNLILVLSLSTMHVFWC). Positions 24–67 (YPVPSSKVSGKSDYFLILLNSCPTRLDRSKELAFLKPILEKMFV) are excised as a propeptide.

Its subcellular location is the secreted. Functionally, modulates arousal and anxiety. May play an important anorexigenic role. Binds to its receptor NPSR1 with nanomolar affinity to increase intracellular calcium concentrations. This is Neuropeptide S (NPS) from Homo sapiens (Human).